The chain runs to 327 residues: Protein UL95 homolog (327 aa).

It belongs to the herpesviridae UL95 family. In terms of assembly, interacts with ORF24; this interaction may serve as a core scaffold for the assembly of the viral transcription initiation complex. Interacts with ORF66. Interacts with ORF18. Interacts with ORF23. Interacts with ORF31. Interacts with host EPAS1; this interaction stabilizes host EPAS1, ensuring its transcriptional activity.

The protein localises to the host nucleus. Participates in the expression of late viral mRNAs in part by interacting with ORF24. Expressed before viral DNA replication, assembles at the viral pre-replication complexes (pre-RCs) and thus serves as a hub for recruiting a viral transcription complex to ORF24 to promote late viral gene expression. Also plays a regulatory role in the viral life cycle by regulating host transcriptional regulators HIF1A and EPAS1. The chain is Protein UL95 homolog (ORF34) from Homo sapiens (Human).